The chain runs to 631 residues: Eukaryotic translation initiation factor 3 subunit L (631 aa).

The PCI domain occupies 335–526 (TFVSVLIFFI…AETTLLDGER (192 aa)). The tract at residues 571–631 (KSAPLPVRKP…PKSRQARIAA (61 aa)) is disordered. Residues 580–612 (PASSSAPAPATTAAPISKSGESAAPAPAEAPAA) show a composition bias toward low complexity.

It belongs to the eIF-3 subunit L family. Component of the eukaryotic translation initiation factor 3 (eIF-3) complex.

The protein resides in the cytoplasm. In terms of biological role, component of the eukaryotic translation initiation factor 3 (eIF-3) complex, which is involved in protein synthesis of a specialized repertoire of mRNAs and, together with other initiation factors, stimulates binding of mRNA and methionyl-tRNAi to the 40S ribosome. The eIF-3 complex specifically targets and initiates translation of a subset of mRNAs involved in cell proliferation. In Cryptococcus neoformans var. neoformans serotype D (strain B-3501A) (Filobasidiella neoformans), this protein is Eukaryotic translation initiation factor 3 subunit L.